The sequence spans 116 residues: MKIVAFTLVAFVALAGASCPYAAPAAAYPAPVAPSGYPAPPCPTNYLFSCQPNLAPAPCAQEAPAYGSAGAYTEQVPHYVGNPSREQVQQFHQRIGMAALMEELRGLGQGIQGQQY.

A signal peptide spans 1 to 17 (MKIVAFTLVAFVALAGA). The VM domain occupies 36-73 (GYPAPPCPTNYLFSCQPNLAPAPCAQEAPAYGSAGAYT).

The protein belongs to the vitelline membrane family.

The protein resides in the secreted. Functionally, major early eggshell protein. This chain is Vitelline membrane protein Vm32E, found in Drosophila santomea (Fruit fly).